Reading from the N-terminus, the 224-residue chain is MTDRDPIHDPAAMREHYRLEGLDETELAAHPMDQFTRWFAQAAQAAAQGVVYEPNAMVVSTADADGRPSSRTVLMKQYDEQGFVFYTNYDSRKARDLAANPYVSLLFPWHPMARQVVVTGLARRTGRDETAAYFRTRPHGSQLGAWASAQSSVIFSRAELDAAYEQLGVRYPEGEQVPVPPNWGGFRIAPQTVEFWQGRWNRLHDRLRYVAEPDGSWRVERLSP.

Substrate is bound by residues 14–17 (REHY) and lysine 76. FMN is bound by residues 71–76 (RTVLMK), 86–87 (YT), arginine 92, lysine 93, and glutamine 115. Tyrosine 133, arginine 137, and serine 141 together coordinate substrate. FMN contacts are provided by residues 150–151 (QS) and tryptophan 196. 202–204 (RLH) contacts substrate. Residue arginine 206 participates in FMN binding.

Belongs to the pyridoxamine 5'-phosphate oxidase family. Homodimer. The cofactor is FMN.

The catalysed reaction is pyridoxamine 5'-phosphate + O2 + H2O = pyridoxal 5'-phosphate + H2O2 + NH4(+). It catalyses the reaction pyridoxine 5'-phosphate + O2 = pyridoxal 5'-phosphate + H2O2. It functions in the pathway cofactor metabolism; pyridoxal 5'-phosphate salvage; pyridoxal 5'-phosphate from pyridoxamine 5'-phosphate: step 1/1. Its pathway is cofactor metabolism; pyridoxal 5'-phosphate salvage; pyridoxal 5'-phosphate from pyridoxine 5'-phosphate: step 1/1. Functionally, catalyzes the oxidation of either pyridoxine 5'-phosphate (PNP) or pyridoxamine 5'-phosphate (PMP) into pyridoxal 5'-phosphate (PLP). In Streptomyces avermitilis (strain ATCC 31267 / DSM 46492 / JCM 5070 / NBRC 14893 / NCIMB 12804 / NRRL 8165 / MA-4680), this protein is Pyridoxine/pyridoxamine 5'-phosphate oxidase.